Reading from the N-terminus, the 71-residue chain is Putative membrane protein insertion efficiency factor (71 aa).

It belongs to the UPF0161 family.

The protein localises to the cell inner membrane. Its function is as follows. Could be involved in insertion of integral membrane proteins into the membrane. The sequence is that of Putative membrane protein insertion efficiency factor from Nitrosospira multiformis (strain ATCC 25196 / NCIMB 11849 / C 71).